Here is a 59-residue protein sequence, read N- to C-terminus: MAKTIKITQTRSAIGRLPKHKATLLGLGLRRIGHTVEREDTPAVRGMVNAVSYMVKVEE.

It belongs to the universal ribosomal protein uL30 family. As to quaternary structure, part of the 50S ribosomal subunit.

In Pectobacterium atrosepticum (strain SCRI 1043 / ATCC BAA-672) (Erwinia carotovora subsp. atroseptica), this protein is Large ribosomal subunit protein uL30.